The chain runs to 536 residues: Probable cytochrome P450 318a1 (536 aa).

The segment covering 439–457 (EEEQLSKGHNDSGSGEKRR) has biased composition (basic and acidic residues). Residues 439-460 (EEEQLSKGHNDSGSGEKRRQRD) form a disordered region. Cysteine 477 serves as a coordination point for heme.

The protein belongs to the cytochrome P450 family. It depends on heme as a cofactor.

It localises to the endoplasmic reticulum membrane. The protein localises to the microsome membrane. May be involved in the metabolism of insect hormones and in the breakdown of synthetic insecticides. This chain is Probable cytochrome P450 318a1 (Cyp318a1), found in Drosophila melanogaster (Fruit fly).